Consider the following 352-residue polypeptide: Eukaryotic translation initiation factor 3 subunit H (352 aa).

Residues 1–34 (MASRKEGTGSTATSSSSTGGAVGKGKGKGGSGDS) form a disordered region. S3 is subject to Phosphoserine. A compositionally biased stretch (low complexity) spans 8–19 (TGSTATSSSSTG). Positions 20 to 32 (GAVGKGKGKGGSG) are enriched in gly residues. Residues 39–173 (VQIDGLVVLK…LKAYRLTPKL (135 aa)) form the MPN domain. S183 carries the post-translational modification Phosphoserine. The interval 265–300 (RNSSKQQQQKHQYQQRRQQENMQRQSRGEPPLPEED) is disordered. Low complexity predominate over residues 270 to 289 (QQQQKHQYQQRRQQENMQRQ). K303 is covalently cross-linked (Glycyl lysine isopeptide (Lys-Gly) (interchain with G-Cter in SUMO2)).

Belongs to the eIF-3 subunit H family. As to quaternary structure, component of the eukaryotic translation initiation factor 3 (eIF-3) complex, which is composed of 13 subunits: EIF3A, EIF3B, EIF3C, EIF3D, EIF3E, EIF3F, EIF3G, EIF3H, EIF3I, EIF3J, EIF3K, EIF3L and EIF3M. The eIF-3 complex appears to include 3 stable modules: module A is composed of EIF3A, EIF3B, EIF3G and EIF3I; module B is composed of EIF3F, EIF3H, and EIF3M; and module C is composed of EIF3C, EIF3D, EIF3E, EIF3K and EIF3L. EIF3C of module C binds EIF3B of module A and EIF3H of module B, thereby linking the three modules. EIF3J is a labile subunit that binds to the eIF-3 complex via EIF3B. The eIF-3 complex interacts with RPS6KB1 under conditions of nutrient depletion. Mitogenic stimulation leads to binding and activation of a complex composed of MTOR and RPTOR, leading to phosphorylation and release of RPS6KB1 and binding of EIF4B to eIF-3. Interacts with RNF139; the interaction leads to protein translation inhibitions in a ubiquitination-dependent manner. Interacts with DHX33; the interaction is independent of RNA.

The protein resides in the cytoplasm. In terms of biological role, component of the eukaryotic translation initiation factor 3 (eIF-3) complex, which is required for several steps in the initiation of protein synthesis. The eIF-3 complex associates with the 40S ribosome and facilitates the recruitment of eIF-1, eIF-1A, eIF-2:GTP:methionyl-tRNAi and eIF-5 to form the 43S pre-initiation complex (43S PIC). The eIF-3 complex stimulates mRNA recruitment to the 43S PIC and scanning of the mRNA for AUG recognition. The eIF-3 complex is also required for disassembly and recycling of post-termination ribosomal complexes and subsequently prevents premature joining of the 40S and 60S ribosomal subunits prior to initiation. The eIF-3 complex specifically targets and initiates translation of a subset of mRNAs involved in cell proliferation, including cell cycling, differentiation and apoptosis, and uses different modes of RNA stem-loop binding to exert either translational activation or repression. The chain is Eukaryotic translation initiation factor 3 subunit H (Eif3h) from Rattus norvegicus (Rat).